The sequence spans 149 residues: Cell division protein SepF (149 aa).

The protein belongs to the SepF family. In terms of assembly, homodimer. Interacts with FtsZ.

Its subcellular location is the cytoplasm. Its function is as follows. Cell division protein that is part of the divisome complex and is recruited early to the Z-ring. Probably stimulates Z-ring formation, perhaps through the cross-linking of FtsZ protofilaments. Its function overlaps with FtsA. The chain is Cell division protein SepF from Clostridium perfringens (strain ATCC 13124 / DSM 756 / JCM 1290 / NCIMB 6125 / NCTC 8237 / Type A).